A 61-amino-acid polypeptide reads, in one-letter code: Cytochrome c oxidase subunit 9, mitochondrial (61 aa).

The Mitochondrial matrix segment spans residues 1-13; sequence MAIAPITGTLKRK. The helical transmembrane segment at 14–36 threads the bilayer; sequence IITDISIGFACGFALATGYWYIE. Topologically, residues 37-56 are mitochondrial intermembrane; it reads HKPLIVKREAYYAKLKAQQE. Positions 57 to 61 are cleaved as a propeptide — removed in mature form; it reads AEDSA.

Belongs to the fungal cytochrome c oxidase subunit 7a family. In terms of assembly, component of the cytochrome c oxidase (complex IV, CIV), a multisubunit enzyme composed of a catalytic core of 3 subunits and several supernumerary subunits. The complex exists as a monomer or a dimer and forms supercomplexes (SCs) in the inner mitochondrial membrane with ubiquinol-cytochrome c oxidoreductase (cytochrome b-c1 complex, complex III, CIII).

It localises to the mitochondrion inner membrane. Its pathway is energy metabolism; oxidative phosphorylation. Functionally, component of the cytochrome c oxidase, the last enzyme in the mitochondrial electron transport chain which drives oxidative phosphorylation. The respiratory chain contains 3 multisubunit complexes succinate dehydrogenase (complex II, CII), ubiquinol-cytochrome c oxidoreductase (cytochrome b-c1 complex, complex III, CIII) and cytochrome c oxidase (complex IV, CIV), that cooperate to transfer electrons derived from NADH and succinate to molecular oxygen, creating an electrochemical gradient over the inner membrane that drives transmembrane transport and the ATP synthase. Cytochrome c oxidase is the component of the respiratory chain that catalyzes the reduction of oxygen to water. Electrons originating from reduced cytochrome c in the intermembrane space (IMS) are transferred via the dinuclear copper A center (CU(A)) of subunit 2 and heme A of subunit 1 to the active site in subunit 1, a binuclear center (BNC) formed by heme A3 and copper B (CU(B)). The BNC reduces molecular oxygen to 2 water molecules using 4 electrons from cytochrome c in the IMS and 4 protons from the mitochondrial matrix. This Debaryomyces hansenii (strain ATCC 36239 / CBS 767 / BCRC 21394 / JCM 1990 / NBRC 0083 / IGC 2968) (Yeast) protein is Cytochrome c oxidase subunit 9, mitochondrial (COX9).